Consider the following 741-residue polypeptide: Protein O-mannosyl-transferase TMTC4 (741 aa).

Topologically, residues 1–14 are cytoplasmic; that stretch reads MAVLDTDLDHILPS. A helical membrane pass occupies residues 15 to 35; sequence SVLPPFWAKLVVGSVAIVCFA. The Extracellular segment spans residues 36–111; it reads RSYDGDFVFD…FHPVGFHVVN (76 aa). A glycan (N-linked (GlcNAc...) asparagine) is linked at asparagine 78. The helical transmembrane segment at 112–132 threads the bilayer; that stretch reads ILLHSGISVLMVDVFSVLFGG. The Cytoplasmic portion of the chain corresponds to 133–141; sequence LQYTSKGRR. The chain crosses the membrane as a helical span at residues 142–162; the sequence is LHLAPRASLLAALLFAVHPVH. Over 163 to 165 the chain is Extracellular; that stretch reads TEC. Residues 166–186 form a helical membrane-spanning segment; that stretch reads VAGVVGRADLLCALFFLLSFL. Residues 187–198 lie on the Cytoplasmic side of the membrane; the sequence is GYCKAFRESNKE. Residues 199–219 form a helical membrane-spanning segment; sequence GAHSSTFWVLLSIFLGAVAML. Over 220 to 224 the chain is Extracellular; the sequence is CKEQG. Residues 225-245 traverse the membrane as a helical segment; that stretch reads ITVLGLNAVFDILVIGKFNVL. Residues 246-268 are Cytoplasmic-facing; the sequence is EIVQKVLHKDKSLENLGMLRNGG. The helical transmembrane segment at 269–288 threads the bilayer; that stretch reads LLFRMTLLTSGGAGMLYVRW. The Extracellular segment spans residues 289-354; it reads RIMGTGPPAF…PLIKSISDWR (66 aa). A helical membrane pass occupies residues 355 to 375; the sequence is VIALAALWFCLIGLICQALCS. Over 376-382 the chain is Cytoplasmic; sequence EDGHKRR. A helical transmembrane segment spans residues 383 to 403; the sequence is ILTLGLGFLVIPFLPASNLFF. The Extracellular portion of the chain corresponds to 404–412; the sequence is RVGFVVAER. The chain crosses the membrane as a helical span at residues 413 to 433; it reads VLYLPSVGYCVLLTFGFGALS. The Cytoplasmic portion of the chain corresponds to 434-440; that stretch reads KHTKKKK. A helical membrane pass occupies residues 441–461; it reads LIAAVVLGILFINTLRCVLRS. The Extracellular portion of the chain corresponds to 462 to 741; it reads GEWRSEEQLF…KLELMQKKAV (280 aa). TPR repeat units lie at residues 482 to 515, 516 to 549, 550 to 583, 584 to 617, 618 to 651, 652 to 685, and 686 to 719; these read AKVH…NPKY, VHAM…QPDF, AAAW…RRKY, PDCY…KPEH, SLAW…IPND, HSLM…NPNA, and ASYH…DPTA. A glycan (N-linked (GlcNAc...) asparagine) is linked at asparagine 497. Asparagine 609 is a glycosylation site (N-linked (GlcNAc...) asparagine).

It belongs to the TMTC family.

The protein localises to the membrane. The protein resides in the endoplasmic reticulum. The enzyme catalyses a di-trans,poly-cis-dolichyl beta-D-mannosyl phosphate + L-seryl-[protein] = 3-O-(alpha-D-mannosyl)-L-seryl-[protein] + a di-trans,poly-cis-dolichyl phosphate + H(+). It catalyses the reaction a di-trans,poly-cis-dolichyl beta-D-mannosyl phosphate + L-threonyl-[protein] = 3-O-(alpha-D-mannosyl)-L-threonyl-[protein] + a di-trans,poly-cis-dolichyl phosphate + H(+). Its pathway is protein modification; protein glycosylation. In terms of biological role, transfers mannosyl residues to the hydroxyl group of serine or threonine residues. The 4 members of the TMTC family are O-mannosyl-transferases dedicated primarily to the cadherin superfamily, each member seems to have a distinct role in decorating the cadherin domains with O-linked mannose glycans at specific regions. Also acts as O-mannosyl-transferase on other proteins such as PDIA3. The sequence is that of Protein O-mannosyl-transferase TMTC4 from Homo sapiens (Human).